Here is a 176-residue protein sequence, read N- to C-terminus: Acireductone dioxygenase (176 aa).

The Fe(2+) site is built by H81, H83, E87, and H126. Ni(2+) contacts are provided by H81, H83, E87, and H126.

Belongs to the acireductone dioxygenase (ARD) family. Fe(2+) is required as a cofactor. Ni(2+) serves as cofactor.

It localises to the cytoplasm. The protein localises to the nucleus. The catalysed reaction is 1,2-dihydroxy-5-(methylsulfanyl)pent-1-en-3-one + O2 = 4-methylsulfanyl-2-oxobutanoate + formate + 2 H(+). It carries out the reaction 1,2-dihydroxy-5-(methylsulfanyl)pent-1-en-3-one + O2 = 3-(methylsulfanyl)propanoate + CO + formate + 2 H(+). It functions in the pathway amino-acid biosynthesis; L-methionine biosynthesis via salvage pathway; L-methionine from S-methyl-5-thio-alpha-D-ribose 1-phosphate: step 5/6. Functionally, catalyzes 2 different reactions between oxygen and the acireductone 1,2-dihydroxy-3-keto-5-methylthiopentene (DHK-MTPene) depending upon the metal bound in the active site. Fe-containing acireductone dioxygenase (Fe-ARD) produces formate and 2-keto-4-methylthiobutyrate (KMTB), the alpha-ketoacid precursor of methionine in the methionine recycle pathway. Ni-containing acireductone dioxygenase (Ni-ARD) produces methylthiopropionate, carbon monoxide and formate, and does not lie on the methionine recycle pathway. In Sclerotinia sclerotiorum (strain ATCC 18683 / 1980 / Ss-1) (White mold), this protein is Acireductone dioxygenase (adi1).